Here is a 102-residue protein sequence, read N- to C-terminus: Small ribosomal subunit protein uS10 (102 aa).

This sequence belongs to the universal ribosomal protein uS10 family. Part of the 30S ribosomal subunit.

In terms of biological role, involved in the binding of tRNA to the ribosomes. This Paramagnetospirillum magneticum (strain ATCC 700264 / AMB-1) (Magnetospirillum magneticum) protein is Small ribosomal subunit protein uS10.